We begin with the raw amino-acid sequence, 244 residues long: Phosphoadenosine 5'-phosphosulfate reductase (244 aa).

C239 serves as the catalytic Nucleophile; cysteine thiosulfonate intermediate.

Belongs to the PAPS reductase family. CysH subfamily.

It localises to the cytoplasm. The enzyme catalyses [thioredoxin]-disulfide + sulfite + adenosine 3',5'-bisphosphate + 2 H(+) = [thioredoxin]-dithiol + 3'-phosphoadenylyl sulfate. It functions in the pathway sulfur metabolism; hydrogen sulfide biosynthesis; sulfite from sulfate: step 3/3. Its function is as follows. Catalyzes the formation of sulfite from phosphoadenosine 5'-phosphosulfate (PAPS) using thioredoxin as an electron donor. In Yersinia enterocolitica serotype O:8 / biotype 1B (strain NCTC 13174 / 8081), this protein is Phosphoadenosine 5'-phosphosulfate reductase.